Reading from the N-terminus, the 90-residue chain is Putative cytochrome c oxidase subunit 5b-like (90 aa).

Zn(2+) is bound by residues Cys-43, Cys-67, and Cys-70.

Belongs to the cytochrome c oxidase subunit 5B (TC 3.D.4.11) family.

The chain is Putative cytochrome c oxidase subunit 5b-like from Arabidopsis thaliana (Mouse-ear cress).